Here is a 967-residue protein sequence, read N- to C-terminus: Isoleucine--tRNA ligase (967 aa).

A 'HIGH' region motif is present at residues 64–74 (PYANGNIHIGH). E600 contacts L-isoleucyl-5'-AMP. Positions 641 to 645 (KQSKS) match the 'KMSKS' region motif. ATP is bound at residue K644.

Belongs to the class-I aminoacyl-tRNA synthetase family. IleS type 1 subfamily. As to quaternary structure, monomer.

The protein resides in the cytoplasm. The catalysed reaction is tRNA(Ile) + L-isoleucine + ATP = L-isoleucyl-tRNA(Ile) + AMP + diphosphate. In terms of biological role, catalyzes the attachment of isoleucine to tRNA(Ile). As IleRS can inadvertently accommodate and process structurally similar amino acids such as valine, to avoid such errors it has two additional distinct tRNA(Ile)-dependent editing activities. One activity is designated as 'pretransfer' editing and involves the hydrolysis of activated Val-AMP. The other activity is designated 'posttransfer' editing and involves deacylation of mischarged Val-tRNA(Ile). The chain is Isoleucine--tRNA ligase from Agrobacterium fabrum (strain C58 / ATCC 33970) (Agrobacterium tumefaciens (strain C58)).